The sequence spans 394 residues: Elongation factor Tu (394 aa).

One can recognise a tr-type G domain in the interval 10–204 (KTHLNVGTIG…TLDTYIEDPV (195 aa)). Residues 19–26 (GHVDHGKT) are G1. 19 to 26 (GHVDHGKT) lines the GTP pocket. Thr26 provides a ligand contact to Mg(2+). The tract at residues 60 to 64 (GITIK) is G2. The segment at 81-84 (DCPG) is G3. GTP-binding positions include 81 to 85 (DCPGH) and 136 to 139 (NKCD). The interval 136–139 (NKCD) is G4. Residues 174-176 (SAL) are G5.

It belongs to the TRAFAC class translation factor GTPase superfamily. Classic translation factor GTPase family. EF-Tu/EF-1A subfamily. Monomer.

It localises to the cytoplasm. It catalyses the reaction GTP + H2O = GDP + phosphate + H(+). GTP hydrolase that promotes the GTP-dependent binding of aminoacyl-tRNA to the A-site of ribosomes during protein biosynthesis. The chain is Elongation factor Tu from Aster yellows witches'-broom phytoplasma (strain AYWB).